The following is a 580-amino-acid chain: Formate--tetrahydrofolate ligase (580 aa).

83 to 90 (TPMGEGKT) is a binding site for ATP.

Belongs to the formate--tetrahydrofolate ligase family.

The catalysed reaction is (6S)-5,6,7,8-tetrahydrofolate + formate + ATP = (6R)-10-formyltetrahydrofolate + ADP + phosphate. It functions in the pathway one-carbon metabolism; tetrahydrofolate interconversion. The protein is Formate--tetrahydrofolate ligase of Haloquadratum walsbyi (strain DSM 16790 / HBSQ001).